The sequence spans 281 residues: UPF0046 protein C25E10.12 (281 aa).

Belongs to the UPF0046 family.

This chain is UPF0046 protein C25E10.12, found in Caenorhabditis elegans.